Here is a 2157-residue protein sequence, read N- to C-terminus: Genome polyprotein (2157 aa).

Residue glycine 2 is the site of N-myristoyl glycine; by host attachment. Residues 2 to 1470 are Cytoplasmic-facing; it reads GAQVSRQNVG…DLNIANSIIA (1469 aa). Residues 567 to 584 are amphipathic alpha-helix; it reads PIEQNPVENYIDEVLNEV. Active-site for protease 2A activity residues include histidine 875 and aspartate 892. Zn(2+)-binding residues include cysteine 909 and cysteine 911. Cysteine 963 acts as the For protease 2A activity in catalysis. The Zn(2+) site is built by cysteine 969 and histidine 971. Positions 1095-1164 are membrane-binding; that stretch reads SDSWLKKFTE…NLRAADSATQ (70 aa). Positions 1095–1228 are oligomerization; the sequence is SDSWLKKFTE…PPGTGKSITT (134 aa). Residues 1116-1120 are RNA-binding; sequence GNKIS. Residues 1188 to 1350 form the SF3 helicase domain; that stretch reads EAKRIKVLYN…YKDTQGKLDV (163 aa). The Zn(2+) site is built by cysteine 1357, cysteine 1368, and cysteine 1373. The segment at 1357–1373 adopts a C4-type; degenerate zinc-finger fold; the sequence is CNVNTKIGNAKCCPFVC. An RNA-binding region spans residues 1400–1407; it reads EDKRRRQV. Residues 1411–1416 form an oligomerization region; it reads MSAIFQ. An intramembrane segment occupies 1471–1486; the sequence is IIANIISIAGIIFVIY. Residues 1487–2157 lie on the Cytoplasmic side of the membrane; sequence KLFCSLQGPY…LLKHEWYEKF (671 aa). Tyrosine 1496 is modified (O-(5'-phospho-RNA)-tyrosine). A Peptidase C3 domain is found at 1515–1693; that stretch reads GPEEEFGRSI…FSAMLLRSYF (179 aa). Residues histidine 1554, glutamate 1585, and cysteine 1661 each act as for protease 3C activity in the active site. Residues 1925-2038 form the RdRp catalytic domain; the sequence is DCIMAFDYTN…SYKYTLDMEA (114 aa). Residues aspartate 1931 and aspartate 2024 each contribute to the Mg(2+) site.

This sequence belongs to the picornaviruses polyprotein family. Interacts with capsid protein VP1 and capsid protein VP3 to form heterotrimeric protomers. In terms of assembly, interacts with capsid protein VP0, and capsid protein VP3 to form heterotrimeric protomers. Five protomers subsequently associate to form pentamers which serve as building blocks for the capsid. Interacts with capsid protein VP2, capsid protein VP3 and capsid protein VP4 following cleavage of capsid protein VP0. As to quaternary structure, interacts with capsid protein VP1 and capsid protein VP3 in the mature capsid. Interacts with capsid protein VP0 and capsid protein VP1 to form heterotrimeric protomers. Five protomers subsequently associate to form pentamers which serve as building blocks for the capsid. Interacts with capsid protein VP4 in the mature capsid. Interacts with protein 2C; this interaction may be important for virion morphogenesis. In terms of assembly, interacts with capsid protein VP1 and capsid protein VP3. As to quaternary structure, homodimer. Homohexamer; forms a hexameric ring structure with 6-fold symmetry characteristic of AAA+ ATPases. Interacts (via N-terminus) with host RTN3 (via reticulon domain); this interaction is important for viral replication. Interacts with capsid protein VP3; this interaction may be important for virion morphogenesis. In terms of assembly, interacts with protein 3CD. As to quaternary structure, homodimer. Interacts with host GBF1. Interacts (via GOLD domain) with host ACBD3 (via GOLD domain); this interaction allows the formation of a viral protein 3A/ACBD3 heterotetramer with a 2:2 stoichiometry, which will stimulate the recruitment of host PI4KB in order to synthesize PI4P at the viral RNA replication sites. Interacts with RNA-directed RNA polymerase. In terms of assembly, interacts with protein 3AB and with RNA-directed RNA polymerase. As to quaternary structure, interacts with Viral protein genome-linked and with protein 3CD. Mg(2+) serves as cofactor. Specific enzymatic cleavages in vivo by the viral proteases yield processing intermediates and the mature proteins. In terms of processing, myristoylation is required for the formation of pentamers during virus assembly. Further assembly of 12 pentamers and a molecule of genomic RNA generates the provirion. Post-translationally, during virion maturation, immature virions are rendered infectious following cleavage of VP0 into VP4 and VP2. This maturation seems to be an autocatalytic event triggered by the presence of RNA in the capsid and it is followed by a conformational change infectious virion. Myristoylation is required during RNA encapsidation and formation of the mature virus particle. In terms of processing, VPg is uridylylated by the polymerase into VPg-pUpU. This acts as a nucleotide-peptide primer for the genomic RNA replication.

The protein resides in the virion. Its subcellular location is the host cytoplasm. It is found in the host cytoplasmic vesicle membrane. It localises to the host nucleus. The catalysed reaction is a ribonucleoside 5'-triphosphate + H2O = a ribonucleoside 5'-diphosphate + phosphate + H(+). It catalyses the reaction Selective cleavage of Tyr-|-Gly bond in the picornavirus polyprotein.. It carries out the reaction RNA(n) + a ribonucleoside 5'-triphosphate = RNA(n+1) + diphosphate. The enzyme catalyses Selective cleavage of Gln-|-Gly bond in the poliovirus polyprotein. In other picornavirus reactions Glu may be substituted for Gln, and Ser or Thr for Gly.. Its activity is regulated as follows. Replication or transcription is subject to high level of random mutations by the nucleotide analog ribavirin. In terms of biological role, forms an icosahedral capsid of pseudo T=3 symmetry with capsid proteins VP2 and VP3. The capsid is 300 Angstroms in diameter, composed of 60 copies of each capsid protein and enclosing the viral positive strand RNA genome. Capsid protein VP1 mainly forms the vertices of the capsid. Capsid protein VP1 interacts with host cell receptor to provide virion attachment to target host cells. This attachment induces virion internalization. Tyrosine kinases are probably involved in the entry process. After binding to its receptor, the capsid undergoes conformational changes. Capsid protein VP1 N-terminus (that contains an amphipathic alpha-helix) and capsid protein VP4 are externalized. Together, they shape a pore in the host membrane through which viral genome is translocated to host cell cytoplasm. Its function is as follows. Forms an icosahedral capsid of pseudo T=3 symmetry with capsid proteins VP2 and VP3. The capsid is 300 Angstroms in diameter, composed of 60 copies of each capsid protein and enclosing the viral positive strand RNA genome. Lies on the inner surface of the capsid shell. After binding to the host receptor, the capsid undergoes conformational changes. Capsid protein VP4 is released, Capsid protein VP1 N-terminus is externalized, and together, they shape a pore in the host membrane through which the viral genome is translocated into the host cell cytoplasm. Functionally, component of immature procapsids, which is cleaved into capsid proteins VP4 and VP2 after maturation. Allows the capsid to remain inactive before the maturation step. In terms of biological role, cysteine protease that cleaves viral polyprotein and specific host proteins. It is responsible for the autocatalytic cleavage between the P1 and P2 regions, which is the first cleavage occurring in the polyprotein. Also cleaves the host translation initiation factor EIF4G1, in order to shut down the capped cellular mRNA translation. Inhibits the host nucleus-cytoplasm protein and RNA trafficking by cleaving host members of the nuclear pores. Counteracts stress granule formation probably by antagonizing its assembly or promoting its dissassembly. Its function is as follows. Plays an essential role in the virus replication cycle by acting as a viroporin. Creates a pore in the host endoplasmic reticulum and as a consequence releases Ca2+ in the cytoplasm of infected cell. In turn, high levels of cytoplasmic calcium may trigger membrane trafficking and transport of viral ER-associated proteins to viroplasms, sites of viral genome replication. Induces and associates with structural rearrangements of intracellular membranes. Displays RNA-binding, nucleotide binding and NTPase activities. May play a role in virion morphogenesis and viral RNA encapsidation by interacting with the capsid protein VP3. Functionally, localizes the viral replication complex to the surface of membranous vesicles. Together with protein 3CD binds the Cis-Active RNA Element (CRE) which is involved in RNA synthesis initiation. Acts as a cofactor to stimulate the activity of 3D polymerase, maybe through a nucleid acid chaperone activity. In terms of biological role, localizes the viral replication complex to the surface of membranous vesicles. It inhibits host cell endoplasmic reticulum-to-Golgi apparatus transport and causes the disassembly of the Golgi complex, possibly through GBF1 interaction. This would result in depletion of MHC, trail receptors and IFN receptors at the host cell surface. Plays an essential role in viral RNA replication by recruiting ACBD3 and PI4KB at the viral replication sites, thereby allowing the formation of the rearranged membranous structures where viral replication takes place. Its function is as follows. Acts as a primer for viral RNA replication and remains covalently bound to viral genomic RNA. VPg is uridylylated prior to priming replication into VPg-pUpU. The oriI viral genomic sequence may act as a template for this. The VPg-pUpU is then used as primer on the genomic RNA poly(A) by the RNA-dependent RNA polymerase to replicate the viral genome. During genome replication, the VPg-RNA linkage is removed by the host TDP2, thereby accelerating replication. During the late stage of the replication cycle, host TDP2 is excluded from sites of viral RNA synthesis and encapsidation, allowing for the generation of progeny virions. Involved in the viral replication complex and viral polypeptide maturation. It exhibits protease activity with a specificity and catalytic efficiency that is different from protease 3C. Protein 3CD lacks polymerase activity. Protein 3CD binds to the 5'UTR of the viral genome. Functionally, major viral protease that mediates proteolytic processing of the polyprotein. Cleaves host EIF5B, contributing to host translation shutoff. Also cleaves host PABPC1, contributing to host translation shutoff. In terms of biological role, replicates the viral genomic RNA on the surface of intracellular membranes. May form linear arrays of subunits that propagate along a strong head-to-tail interaction called interface-I. Covalently attaches UMP to a tyrosine of VPg, which is used to prime RNA synthesis. The positive stranded RNA genome is first replicated at virus induced membranous vesicles, creating a dsRNA genomic replication form. This dsRNA is then used as template to synthesize positive stranded RNA genomes. ss(+)RNA genomes are either translated, replicated or encapsidated. This chain is Genome polyprotein, found in Homo sapiens (Human).